Reading from the N-terminus, the 411-residue chain is tRNA pseudouridine synthase Pus10 (411 aa).

The 128-residue stretch at 65–192 (ALAKCHLPTR…SGQVKVVRNP (128 aa)) folds into the THUMP domain. Asp244 functions as the Nucleophile in the catalytic mechanism. Substrate-binding residues include Tyr305 and Tyr376.

Belongs to the pseudouridine synthase Pus10 family.

It carries out the reaction uridine(54) in tRNA = pseudouridine(54) in tRNA. The enzyme catalyses uridine(55) in tRNA = pseudouridine(55) in tRNA. Functionally, responsible for synthesis of pseudouridine from uracil-54 and uracil-55 in the psi GC loop of transfer RNAs. The sequence is that of tRNA pseudouridine synthase Pus10 from Pyrobaculum arsenaticum (strain DSM 13514 / JCM 11321 / PZ6).